An 88-amino-acid polypeptide reads, in one-letter code: KTx type I (88 aa).

The first 19 residues, 1–19, serve as a signal peptide directing secretion; it reads MKTTLVVVVLACIVALTSA. One can recognise a ShKT domain in the interval 54–88; the sequence is CKDVLSEFSCGVLKKDGQCNKADIQAKCKLTCDKC. Intrachain disulfides connect Cys-54/Cys-88, Cys-63/Cys-81, and Cys-72/Cys-85.

Belongs to the sea anemone type 1 potassium channel toxin family. Expressed both outside and in acontia, a specialised envenomation structure laden with batteries of venom-containing nematocysts found only in the superfamily Metridioidea.

It is found in the secreted. It localises to the nematocyst. Functionally, inhibits voltage-gated potassium channels (Kv1/KCNA). This Calliactis polypus (Hermit crab anemone) protein is KTx type I.